Here is a 607-residue protein sequence, read N- to C-terminus: Elongation factor 4 (607 aa).

Residues 11–193 enclose the tr-type G domain; that stretch reads KSIRNFSIIA…QIVAKVPAPT (183 aa). GTP-binding positions include 23–28 and 140–143; these read DHGKST and NKID.

This sequence belongs to the TRAFAC class translation factor GTPase superfamily. Classic translation factor GTPase family. LepA subfamily.

It localises to the cell membrane. The enzyme catalyses GTP + H2O = GDP + phosphate + H(+). Functionally, required for accurate and efficient protein synthesis under certain stress conditions. May act as a fidelity factor of the translation reaction, by catalyzing a one-codon backward translocation of tRNAs on improperly translocated ribosomes. Back-translocation proceeds from a post-translocation (POST) complex to a pre-translocation (PRE) complex, thus giving elongation factor G a second chance to translocate the tRNAs correctly. Binds to ribosomes in a GTP-dependent manner. This chain is Elongation factor 4, found in Exiguobacterium sibiricum (strain DSM 17290 / CCUG 55495 / CIP 109462 / JCM 13490 / 255-15).